The following is a 405-amino-acid chain: Probable tRNA sulfurtransferase (405 aa).

The THUMP domain occupies 60–165; it reads DQVMARLSQV…REAIYLSTKT (106 aa). Residues 183–184, 208–209, Arg-265, Gly-287, and Gln-296 each bind ATP; these read ML and HF.

This sequence belongs to the ThiI family.

It is found in the cytoplasm. It catalyses the reaction [ThiI sulfur-carrier protein]-S-sulfanyl-L-cysteine + a uridine in tRNA + 2 reduced [2Fe-2S]-[ferredoxin] + ATP + H(+) = [ThiI sulfur-carrier protein]-L-cysteine + a 4-thiouridine in tRNA + 2 oxidized [2Fe-2S]-[ferredoxin] + AMP + diphosphate. It carries out the reaction [ThiS sulfur-carrier protein]-C-terminal Gly-Gly-AMP + S-sulfanyl-L-cysteinyl-[cysteine desulfurase] + AH2 = [ThiS sulfur-carrier protein]-C-terminal-Gly-aminoethanethioate + L-cysteinyl-[cysteine desulfurase] + A + AMP + 2 H(+). Its pathway is cofactor biosynthesis; thiamine diphosphate biosynthesis. In terms of biological role, catalyzes the ATP-dependent transfer of a sulfur to tRNA to produce 4-thiouridine in position 8 of tRNAs, which functions as a near-UV photosensor. Also catalyzes the transfer of sulfur to the sulfur carrier protein ThiS, forming ThiS-thiocarboxylate. This is a step in the synthesis of thiazole, in the thiamine biosynthesis pathway. The sulfur is donated as persulfide by IscS. The chain is Probable tRNA sulfurtransferase from Lacticaseibacillus paracasei (strain ATCC 334 / BCRC 17002 / CCUG 31169 / CIP 107868 / KCTC 3260 / NRRL B-441) (Lactobacillus paracasei).